We begin with the raw amino-acid sequence, 544 residues long: CTP synthase (544 aa).

Residues 1-266 (MKYIFVTGGV…GKAVEELLGL (266 aa)) form an amidoligase domain region. Ser12 contacts CTP. Ser12 is a binding site for UTP. An ATP-binding site is contributed by 13-18 (SLGKGV). Tyr53 contacts L-glutamine. Asp70 lines the ATP pocket. Mg(2+)-binding residues include Asp70 and Glu140. CTP contacts are provided by residues 147 to 149 (DIE), 187 to 192 (KTKPTQ), and Lys223. UTP-binding positions include 187–192 (KTKPTQ) and Lys223. The Glutamine amidotransferase type-1 domain maps to 291 to 544 (TIAIAGKYTA…VKAALEHQQQ (254 aa)). Residue Gly356 participates in L-glutamine binding. The active-site Nucleophile; for glutamine hydrolysis is Cys383. L-glutamine-binding positions include 384 to 387 (LGMQ), Glu407, and Arg467. Active-site residues include His517 and Glu519.

It belongs to the CTP synthase family. Homotetramer.

It catalyses the reaction UTP + L-glutamine + ATP + H2O = CTP + L-glutamate + ADP + phosphate + 2 H(+). It carries out the reaction L-glutamine + H2O = L-glutamate + NH4(+). The enzyme catalyses UTP + NH4(+) + ATP = CTP + ADP + phosphate + 2 H(+). The protein operates within pyrimidine metabolism; CTP biosynthesis via de novo pathway; CTP from UDP: step 2/2. Its activity is regulated as follows. Allosterically activated by GTP, when glutamine is the substrate; GTP has no effect on the reaction when ammonia is the substrate. The allosteric effector GTP functions by stabilizing the protein conformation that binds the tetrahedral intermediate(s) formed during glutamine hydrolysis. Inhibited by the product CTP, via allosteric rather than competitive inhibition. Its function is as follows. Catalyzes the ATP-dependent amination of UTP to CTP with either L-glutamine or ammonia as the source of nitrogen. Regulates intracellular CTP levels through interactions with the four ribonucleotide triphosphates. This chain is CTP synthase, found in Deinococcus radiodurans (strain ATCC 13939 / DSM 20539 / JCM 16871 / CCUG 27074 / LMG 4051 / NBRC 15346 / NCIMB 9279 / VKM B-1422 / R1).